Reading from the N-terminus, the 100-residue chain is Putative membrane protein insertion efficiency factor (100 aa).

The protein belongs to the UPF0161 family.

Its subcellular location is the cell membrane. Could be involved in insertion of integral membrane proteins into the membrane. This Enterococcus faecalis (strain ATCC 700802 / V583) protein is Putative membrane protein insertion efficiency factor.